Here is a 609-residue protein sequence, read N- to C-terminus: UvrABC system protein C (609 aa).

One can recognise a GIY-YIG domain in the interval 13–91 (HEPGVYRMYD…IKLYQPRYNV (79 aa)). In terms of domain architecture, UVR spans 201-236 (QQVLDYLIGKMEQASRNLDFEQAARYRDQIQAVRSV).

It belongs to the UvrC family. As to quaternary structure, interacts with UvrB in an incision complex.

The protein localises to the cytoplasm. In terms of biological role, the UvrABC repair system catalyzes the recognition and processing of DNA lesions. UvrC both incises the 5' and 3' sides of the lesion. The N-terminal half is responsible for the 3' incision and the C-terminal half is responsible for the 5' incision. The chain is UvrABC system protein C from Haemophilus influenzae (strain ATCC 51907 / DSM 11121 / KW20 / Rd).